The following is a 234-amino-acid chain: Phosphoglycolate phosphatase (234 aa).

The Nucleophile role is filled by D15. The Mg(2+) site is built by D15, D17, and D177.

This sequence belongs to the HAD-like hydrolase superfamily. CbbY/CbbZ/Gph/YieH family. As to quaternary structure, monomer. Mg(2+) serves as cofactor. The cofactor is chloride.

The enzyme catalyses 2-phosphoglycolate + H2O = glycolate + phosphate. The protein operates within organic acid metabolism; glycolate biosynthesis; glycolate from 2-phosphoglycolate: step 1/1. Specifically catalyzes the dephosphorylation of 2-phosphoglycolate. Is involved in the dissimilation of the intracellular 2-phosphoglycolate formed during the DNA repair of 3'-phosphoglycolate ends, a major class of DNA lesions induced by oxidative stress. In Photorhabdus laumondii subsp. laumondii (strain DSM 15139 / CIP 105565 / TT01) (Photorhabdus luminescens subsp. laumondii), this protein is Phosphoglycolate phosphatase.